The following is a 664-amino-acid chain: UvrABC system protein B (664 aa).

The Helicase ATP-binding domain maps to 23–180; that stretch reads EGLNRGMRFQ…EKLAKIGYQR (158 aa). 36-43 contributes to the ATP binding site; it reads GVTGSGKT. The Beta-hairpin signature appears at 89 to 112; the sequence is YYDYYQPEAYIPTKDLYIEKNADI. In terms of domain architecture, Helicase C-terminal spans 426–588; the sequence is QVDDLINEIV…ITPRSIVKPL (163 aa). One can recognise a UVR domain in the interval 622–657; that stretch reads EEYVALLEEEMYRAASELRYEDAAALRDELFRVKET.

This sequence belongs to the UvrB family. Forms a heterotetramer with UvrA during the search for lesions. Interacts with UvrC in an incision complex.

It is found in the cytoplasm. The UvrABC repair system catalyzes the recognition and processing of DNA lesions. A damage recognition complex composed of 2 UvrA and 2 UvrB subunits scans DNA for abnormalities. Upon binding of the UvrA(2)B(2) complex to a putative damaged site, the DNA wraps around one UvrB monomer. DNA wrap is dependent on ATP binding by UvrB and probably causes local melting of the DNA helix, facilitating insertion of UvrB beta-hairpin between the DNA strands. Then UvrB probes one DNA strand for the presence of a lesion. If a lesion is found the UvrA subunits dissociate and the UvrB-DNA preincision complex is formed. This complex is subsequently bound by UvrC and the second UvrB is released. If no lesion is found, the DNA wraps around the other UvrB subunit that will check the other stand for damage. This Thermotoga neapolitana (strain ATCC 49049 / DSM 4359 / NBRC 107923 / NS-E) protein is UvrABC system protein B.